Consider the following 332-residue polypeptide: Acryloyl-coenzyme A reductase (332 aa).

Residue C38 participates in Zn(2+) binding. An NADP(+)-binding site is contributed by Y39. 6 residues coordinate Zn(2+): H60, D90, C93, C96, C104, and C146. Residues 172-175 (SGGV) and 194-196 (TTS) each bind NADP(+).

The protein belongs to the zinc-containing alcohol dehydrogenase family. As to quaternary structure, monomer. Zn(2+) is required as a cofactor.

It carries out the reaction propanoyl-CoA + NADP(+) = acryloyl-CoA + NADPH + H(+). Its function is as follows. Plays a role in autotrophic carbon fixation via the 3-hydroxypropionate/4-hydroxybutyrate cycle. Catalyzes the acryloyl-CoA dependent NADPH oxidation and formation of propionyl-CoA. The sequence is that of Acryloyl-coenzyme A reductase from Metallosphaera sedula (strain ATCC 51363 / DSM 5348 / JCM 9185 / NBRC 15509 / TH2).